Consider the following 163-residue polypeptide: Gas vesicle protein H2 (163 aa).

Positions 57-92 (LGSDARSPSTPAGNADDAGDAETAHIETRASDDSDD) are disordered. A compositionally biased stretch (basic and acidic residues) spans 78-88 (ETAHIETRASD).

The protein belongs to the gas vesicle GvpH family. As to quaternary structure, gvpF to GvpM interact with each other in vitro, and may form multi-subunit complex(es). Interacts with GvpC. Might interact with GvpA.

The protein localises to the gas vesicle. It is found in the cytoplasm. In terms of biological role, a minor component of the gas vesicle, also found in soluble extracts. Proteins GvpF to GvpM might be involved in nucleating gas vesicle formation. Gas vesicles are hollow, gas filled proteinaceous nanostructures found in several microbial planktonic microorganisms. They allow positioning of halobacteria at the optimal depth for growth in the poorly aerated, shallow brine pools of their habitat. Functionally, expression of 2 c-vac DNA fragments containing 2 divergently transcribed regions (gvpE-gvpF-gvpG-gvpH-gvpI-gvpJ-gvpK-gvpL-gvpM and gvpA-gvpC-gvpN-gvpO) allows H.volcanii to produce gas vesicles. This Halobacterium salinarum (strain ATCC 700922 / JCM 11081 / NRC-1) (Halobacterium halobium) protein is Gas vesicle protein H2.